A 100-amino-acid polypeptide reads, in one-letter code: uncharacterized protein (100 aa).

The signal sequence occupies residues 1 to 18; the sequence is MWGFLVLKARWLVTPVRT. Residues 48–86 form a disordered region; the sequence is LTRGVIRVSPQERSQQNQSAPKGPTPSTRPKPRTLGPQA. Residues 58-69 show a composition bias toward polar residues; that stretch reads QERSQQNQSAPK. N-linked (GlcNAc...) asparagine glycosylation is present at asparagine 64.

The protein resides in the secreted. This is an uncharacterized protein from Homo sapiens (Human).